Consider the following 390-residue polypeptide: tRNA-specific 2-thiouridylase MnmA (390 aa).

ATP is bound by residues 29–36 (GLSGGVDS) and Leu55. Catalysis depends on Cys116, which acts as the Nucleophile. The cysteines at positions 116 and 225 are disulfide-linked. Gly141 lines the ATP pocket. Residues 175–177 (KDQ) form an interaction with tRNA region. Catalysis depends on Cys225, which acts as the Cysteine persulfide intermediate. An interaction with tRNA region spans residues 330–331 (RY).

It belongs to the MnmA/TRMU family.

The protein resides in the cytoplasm. It catalyses the reaction S-sulfanyl-L-cysteinyl-[protein] + uridine(34) in tRNA + AH2 + ATP = 2-thiouridine(34) in tRNA + L-cysteinyl-[protein] + A + AMP + diphosphate + H(+). Catalyzes the 2-thiolation of uridine at the wobble position (U34) of tRNA, leading to the formation of s(2)U34. This is tRNA-specific 2-thiouridylase MnmA from Prochlorococcus marinus (strain MIT 9515).